A 254-amino-acid chain; its full sequence is D-aminoacyl-tRNA deacylase (254 aa).

The interval 61–82 is disordered; sequence KPTLTVHTPGNLTDDNSHGGNP. Over residues 65 to 74 the composition is skewed to polar residues; the sequence is TVHTPGNLTD.

It belongs to the DtdA deacylase family. In terms of assembly, monomer. The cofactor is Zn(2+).

The catalysed reaction is a D-aminoacyl-tRNA + H2O = a tRNA + a D-alpha-amino acid + H(+). The enzyme catalyses glycyl-tRNA(Ala) + H2O = tRNA(Ala) + glycine + H(+). Functionally, D-aminoacyl-tRNA deacylase with broad substrate specificity. By recycling D-aminoacyl-tRNA to D-amino acids and free tRNA molecules, this enzyme counteracts the toxicity associated with the formation of D-aminoacyl-tRNA entities in vivo. This chain is D-aminoacyl-tRNA deacylase, found in Methanococcus maripaludis (strain DSM 14266 / JCM 13030 / NBRC 101832 / S2 / LL).